Here is a 282-residue protein sequence, read N- to C-terminus: Energy-coupling factor transporter ATP-binding protein EcfA1 (282 aa).

In terms of domain architecture, ABC transporter spans Ile-6–Asp-243. Gly-40–Ser-47 lines the ATP pocket.

It belongs to the ABC transporter superfamily. Energy-coupling factor EcfA family. Forms a stable energy-coupling factor (ECF) transporter complex composed of 2 membrane-embedded substrate-binding proteins (S component), 2 ATP-binding proteins (A component) and 2 transmembrane proteins (T component).

It is found in the cell membrane. In terms of biological role, ATP-binding (A) component of a common energy-coupling factor (ECF) ABC-transporter complex. Unlike classic ABC transporters this ECF transporter provides the energy necessary to transport a number of different substrates. The chain is Energy-coupling factor transporter ATP-binding protein EcfA1 from Lactobacillus delbrueckii subsp. bulgaricus (strain ATCC 11842 / DSM 20081 / BCRC 10696 / JCM 1002 / NBRC 13953 / NCIMB 11778 / NCTC 12712 / WDCM 00102 / Lb 14).